Reading from the N-terminus, the 478-residue chain is Glutamate--tRNA ligase (478 aa).

A 'HIGH' region motif is present at residues 15–25 (PSPTGFLHIGG). Residues 244–248 (KLSKR) carry the 'KMSKS' region motif. K247 is a binding site for ATP.

It belongs to the class-I aminoacyl-tRNA synthetase family. Glutamate--tRNA ligase type 1 subfamily. As to quaternary structure, monomer.

It is found in the cytoplasm. It catalyses the reaction tRNA(Glu) + L-glutamate + ATP = L-glutamyl-tRNA(Glu) + AMP + diphosphate. Functionally, catalyzes the attachment of glutamate to tRNA(Glu) in a two-step reaction: glutamate is first activated by ATP to form Glu-AMP and then transferred to the acceptor end of tRNA(Glu). The protein is Glutamate--tRNA ligase of Bradyrhizobium sp. (strain ORS 278).